A 95-amino-acid polypeptide reads, in one-letter code: Aspartyl/glutamyl-tRNA(Asn/Gln) amidotransferase subunit C (95 aa).

It belongs to the GatC family. As to quaternary structure, heterotrimer of A, B and C subunits.

It catalyses the reaction L-glutamyl-tRNA(Gln) + L-glutamine + ATP + H2O = L-glutaminyl-tRNA(Gln) + L-glutamate + ADP + phosphate + H(+). The catalysed reaction is L-aspartyl-tRNA(Asn) + L-glutamine + ATP + H2O = L-asparaginyl-tRNA(Asn) + L-glutamate + ADP + phosphate + 2 H(+). Its function is as follows. Allows the formation of correctly charged Asn-tRNA(Asn) or Gln-tRNA(Gln) through the transamidation of misacylated Asp-tRNA(Asn) or Glu-tRNA(Gln) in organisms which lack either or both of asparaginyl-tRNA or glutaminyl-tRNA synthetases. The reaction takes place in the presence of glutamine and ATP through an activated phospho-Asp-tRNA(Asn) or phospho-Glu-tRNA(Gln). This is Aspartyl/glutamyl-tRNA(Asn/Gln) amidotransferase subunit C from Cereibacter sphaeroides (strain ATCC 17025 / ATH 2.4.3) (Rhodobacter sphaeroides).